The primary structure comprises 308 residues: Homeobox-leucine zipper protein HOX2 (308 aa).

Disordered regions lie at residues 15–36 (QGSLTSSTTTTSSPGAGSSSPW) and 71–117 (QGRA…RKKL). Low complexity predominate over residues 74–88 (ASTSPDSAAALSSAS). The homeobox DNA-binding region spans 112-171 (GGRKKLRLSKDQAAVLEECFKTHSTLNPKQKVALANRLGLRPRQVEVWFQNRRARTKLKQ). A leucine-zipper region spans residues 170–214 (KQTEVDCEYLKRWCERLADENKRLEKELADLRALKAAPSPASASA).

This sequence belongs to the HD-ZIP homeobox family. Class II subfamily. As to quaternary structure, homodimer. May form a heterodimer with HOX1, HOX3 or HOX7. In terms of tissue distribution, expressed in seedlings, roots, leaves, nodes, internodes, flowers and embryo.

It is found in the nucleus. Probable transcription factor that binds to the DNA sequence 5'-CAAT[GC]ATTG-3'. In Oryza sativa subsp. indica (Rice), this protein is Homeobox-leucine zipper protein HOX2 (HOX2).